The sequence spans 3994 residues: Hybrid PKS-NRPs synthetase opdA (3994 aa).

The 437-residue stretch at 6–442 (PEPIAIVGSS…GTNSHVILES (437 aa)) folds into the Ketosynthase family 3 (KS3) domain. Catalysis depends on for beta-ketoacyl synthase activity residues Cys-179, His-316, and His-362. The segment at 559–881 (VFTGQGAQWP…LKRDSNDVEA (323 aa)) is malonyl-CoA:ACP transacylase (MAT) domain. The interval 951–1085 (HELLGRRTHD…GRLIIHLGET (135 aa)) is N-terminal hotdog fold. The tract at residues 951–1251 (HELLGRRTHD…SVKPMAPPTA (301 aa)) is dehydratase (DH) domain. A PKS/mFAS DH domain is found at 951 to 1252 (HELLGRRTHD…VKPMAPPTAE (302 aa)). The active-site Proton acceptor; for dehydratase activity is the His-983. The C-terminal hotdog fold stretch occupies residues 1100–1252 (LLSVDTDEGY…VKPMAPPTAE (153 aa)). Asp-1159 (proton donor; for dehydratase activity) is an active-site residue. A methyltransferase (MT) domain region spans residues 1292 to 1593 (DRVVLYYVQR…VDLAFHDLPD (302 aa)). The tract at residues 2123–2297 (TYLMVGMAGG…ASIIHIGFVT (175 aa)) is ketoreductase (KR) domain. A Carrier 1 domain is found at 2406–2483 (EAVEITQKAF…QICTNAAKQL (78 aa)). Ser-2443 carries the O-(pantetheine 4'-phosphoryl)serine modification. Residues 2486–2575 (QKGGQEPSEQ…FDPDDRDYNP (90 aa)) are disordered. Polar residues-rich tracts occupy residues 2505-2514 (LHVSQGSLHT) and 2522-2546 (TETSSVGGTENTPLTSASSSPSVTD). A compositionally biased stretch (basic and acidic residues) spans 2547–2556 (TVEKRDKGDI). Positions 2557–2570 (SVDEGPNEQFDPDD) are enriched in acidic residues. A condensation (C) domain region spans residues 2582 to 3007 (RLSSGQSRIY…SNTYMTVAKI (426 aa)). Positions 3043–3436 (HETNREDLAI…DGSLVFLGRL (394 aa)) are adenylation (A) (KR) domain. One can recognise a Carrier 2 domain in the interval 3553–3630 (PKLSLRQSEL…KMTMLVDLER (78 aa)). Position 3590 is an O-(pantetheine 4'-phosphoryl)serine (Ser-3590). A reductase (RED) domain region spans residues 3679 to 3895 (TGATGFLGGS…FDFKKVEEVA (217 aa)).

It in the C-terminal section; belongs to the NRP synthetase family. Requires pantetheine 4'-phosphate as cofactor.

It participates in secondary metabolite biosynthesis. Functionally, hybrid PKS-NRPS synthetase; part of the gene cluster that mediates the biosynthesis of oxopyrrolidines, polyketide-amino acid hybrid compounds with feature structures of tetramic acid. The polyketide chain is first assembled by the highly reducing PKS module of opdA using acetyl-CoA as the starter unit and five malonyl-CoA as the extender units. OpdC acts as trans-acting enoyl reductase and reduces the terminal alkenyl to alkane. The 17R in oxopyrrolidine A and 15R, 17S in oxopyrrolidine B are generated by non-stereospecific catalysis of the ketoreductase (KR) domain and enoyl reductases. Then the polyketides with specific configurations are transferred to the NRPS module of opdA and linked to L-tyrosine to form an amide bond. Finally, the oxopyrrolidines are offloaded through a Dieckmann cyclization catalyzed by the terminal D domain to give a tetramic acid moiety. The chain is Hybrid PKS-NRPs synthetase opdA from Penicillium oxalicum (strain 114-2 / CGMCC 5302) (Penicillium decumbens).